Consider the following 493-residue polypeptide: Chitinase 1 (493 aa).

The first 20 residues, 1–20 (MISCNILGITIAAFITSTLA), serve as a signal peptide directing secretion. Positions 27–318 (VNVMYYWGQN…HGSSAALGQA (292 aa)) constitute a GH18 domain. Residue E164 is the Proton donor of the active site.

This sequence belongs to the glycosyl hydrolase 18 family. Chitinase class III subfamily.

It catalyses the reaction Random endo-hydrolysis of N-acetyl-beta-D-glucosaminide (1-&gt;4)-beta-linkages in chitin and chitodextrins.. This Rhizopus niveus protein is Chitinase 1 (CHI1).